Consider the following 199-residue polypeptide: NAD(P)H dehydrogenase (quinone) (199 aa).

One can recognise a Flavodoxin-like domain in the interval 4–190 (VLVLYYSSYG…EGARHQGELV (187 aa)). Residues 10–15 (SSYGHI) and 78–80 (TRY) contribute to the FMN site. Residue Tyr-12 participates in NAD(+) binding. Trp-98 serves as a coordination point for substrate. FMN is bound by residues 113-119 (STATQHG) and His-134.

The protein belongs to the WrbA family. FMN serves as cofactor.

The catalysed reaction is a quinone + NADH + H(+) = a quinol + NAD(+). It catalyses the reaction a quinone + NADPH + H(+) = a quinol + NADP(+). The polypeptide is NAD(P)H dehydrogenase (quinone) (Paraburkholderia phymatum (strain DSM 17167 / CIP 108236 / LMG 21445 / STM815) (Burkholderia phymatum)).